The sequence spans 347 residues: Photosystem II assembly protein Ycf48 (347 aa).

The first 38 residues, Met-1–Ala-38, serve as a signal peptide directing secretion. The short motif at Arg-202–Arg-226 is the Arg-rich patch element.

It belongs to the Ycf48 family. In terms of assembly, interacts with the D1 protein (crystallized with PsbA1 or PsbA3), via the latter's C-terminal prepropeptide, may interact with parts of the mature D1 protein as well.

The protein localises to the cellular thylakoid lumen. A factor required for optimal assembly of photosystem II (PSII), acting in the early stages of PSII assembly. Also plays a role in replacement of photodamaged D1 (psbA). Assists YidC in synthesis of chlorophyll-binding proteins. This is Photosystem II assembly protein Ycf48 from Thermosynechococcus vestitus (strain NIES-2133 / IAM M-273 / BP-1).